A 238-amino-acid polypeptide reads, in one-letter code: MIAFTVLLSLAAVLQQSSGTVDFASESSNKKDYRKEIVDKHNDLRRSVKPTARNMLQMKWNSRAAQNAKRWANRCTFAHSPPYTRTVGKLRCGENIFMSSQPFAWSGVVQAWYDEVKKFVYGIGAKPPSSVIGHYTQVVWYKSHLLGCASAKCSSTKYLYVCQYCPAGNIIGSIATPYKSGPPCGDCPSACDNGLCTNPCKHNNDFSNCKALAKKSKCQTEWIKSKCPATCFCRTEII.

An N-terminal signal peptide occupies residues 1-19; the sequence is MIAFTVLLSLAAVLQQSSG. Positions 20 to 28 are excised as a propeptide; it reads TVDFASESS. The 127-residue stretch at 38-164 folds into the SCP domain; that stretch reads VDKHNDLRRS…STKYLYVCQY (127 aa). Cystine bridges form between cysteine 75–cysteine 153, cysteine 92–cysteine 165, cysteine 148–cysteine 162, cysteine 184–cysteine 191, cysteine 187–cysteine 196, cysteine 200–cysteine 233, cysteine 209–cysteine 227, and cysteine 218–cysteine 231. The region spanning 200 to 233 is the ShKT domain; it reads CKHNNDFSNCKALAKKSKCQTEWIKSKCPATCFC.

It belongs to the CRISP family. As to expression, expressed by the venom gland.

Its subcellular location is the secreted. Functionally, blocks olfactory (CNGA2) and retinal (CNGA1) CNG channel currents. Does not affect neither depolarization- nor caffeine-induced contraction of smooth muscle. In Oxyuranus scutellatus scutellatus (Australian taipan), this protein is Cysteine-rich venom protein pseudechetoxin-like.